The following is a 267-amino-acid chain: NAD kinase 2 (267 aa).

The active-site Proton acceptor is Asp52. NAD(+) contacts are provided by residues Asp52–Gly53, Asn124–Glu125, Arg151, Asp153, Thr164–Ser169, and Ala188.

It belongs to the NAD kinase family. A divalent metal cation is required as a cofactor.

The protein resides in the cytoplasm. It catalyses the reaction NAD(+) + ATP = ADP + NADP(+) + H(+). Functionally, involved in the regulation of the intracellular balance of NAD and NADP, and is a key enzyme in the biosynthesis of NADP. Catalyzes specifically the phosphorylation on 2'-hydroxyl of the adenosine moiety of NAD to yield NADP. The polypeptide is NAD kinase 2 (Bacillus subtilis (strain 168)).